The chain runs to 188 residues: Oleosin S2-2 (188 aa).

Ala2 is modified (N-acetylalanine). The polar stretch occupies residues 2–51 (ATVERRVQVDPTDKRIHLQPQYEGDVGYGYGYGGRADYKSSGPSSNQIVA). 3 helical membrane passes run 49 to 69 (IVAL…AGLT), 74 to 94 (VIGL…IVPA), and 96 to 116 (ITIG…LTGL). Positions 52 to 125 (LIVGVPVGGS…LSSVSWVLNY (74 aa)) are hydrophobic. The disordered stretch occupies residues 164-188 (DKAHEAHDTSLTTETTEPGKTRRHT). A compositionally biased stretch (polar residues) spans 172-181 (TSLTTETTEP).

It belongs to the oleosin family.

It is found in the lipid droplet. Its subcellular location is the membrane. Its function is as follows. May have a structural role to stabilize the lipid body during desiccation of the seed by preventing coalescence of the oil. Probably interacts with both lipid and phospholipid moieties of lipid bodies. May also provide recognition signals for specific lipase anchorage in lipolysis during seedling growth. In Brassica napus (Rape), this protein is Oleosin S2-2 (S2).